The primary structure comprises 308 residues: tRNA pseudouridine synthase B (308 aa).

Aspartate 47 (nucleophile) is an active-site residue.

The protein belongs to the pseudouridine synthase TruB family. Type 1 subfamily.

It catalyses the reaction uridine(55) in tRNA = pseudouridine(55) in tRNA. Functionally, responsible for synthesis of pseudouridine from uracil-55 in the psi GC loop of transfer RNAs. This Xanthomonas campestris pv. campestris (strain B100) protein is tRNA pseudouridine synthase B.